We begin with the raw amino-acid sequence, 958 residues long: Glycine dehydrogenase (decarboxylating) (958 aa).

The residue at position 707 (lysine 707) is an N6-(pyridoxal phosphate)lysine.

The protein belongs to the GcvP family. As to quaternary structure, the glycine cleavage system is composed of four proteins: P, T, L and H. The cofactor is pyridoxal 5'-phosphate.

The catalysed reaction is N(6)-[(R)-lipoyl]-L-lysyl-[glycine-cleavage complex H protein] + glycine + H(+) = N(6)-[(R)-S(8)-aminomethyldihydrolipoyl]-L-lysyl-[glycine-cleavage complex H protein] + CO2. Functionally, the glycine cleavage system catalyzes the degradation of glycine. The P protein binds the alpha-amino group of glycine through its pyridoxal phosphate cofactor; CO(2) is released and the remaining methylamine moiety is then transferred to the lipoamide cofactor of the H protein. This Stutzerimonas stutzeri (strain A1501) (Pseudomonas stutzeri) protein is Glycine dehydrogenase (decarboxylating).